The following is a 636-amino-acid chain: Probable potassium transport system protein Kup (636 aa).

Transmembrane regions (helical) follow at residues 22 to 42 (VGLL…SPLY), 64 to 84 (ILSL…VMFI), 115 to 135 (LMVI…MITP), 150 to 170 (FDGI…ALFL), 182 to 202 (LFGP…VHGI), 220 to 240 (FFVV…LALT), 261 to 281 (WFIL…ALLL), 293 to 313 (LLAP…ATVI), 351 to 371 (IYIG…VIGF), 383 to 403 (VAVT…MLLL), 408 to 428 (PLLA…FFAA), and 433 to 453 (IAQG…LMST).

Belongs to the HAK/KUP transporter (TC 2.A.72) family.

The protein localises to the cell inner membrane. The catalysed reaction is K(+)(in) + H(+)(in) = K(+)(out) + H(+)(out). Transport of potassium into the cell. Likely operates as a K(+):H(+) symporter. The sequence is that of Probable potassium transport system protein Kup from Pseudomonas putida (strain ATCC 47054 / DSM 6125 / CFBP 8728 / NCIMB 11950 / KT2440).